Reading from the N-terminus, the 1390-residue chain is MNVQQTQQQQAMAAQQQSMVAQQQQQIAQQQSAIAQQQIAQQQQIAQQQQIAQQQQQHQQHQQHQQQHQQQQQHQQQHQQQQHIQQQQQPQQQQPQQQQSQQQQQQHQQQQQPQQQQPPQQQQQQPPQQQQQPQQQQQQQQQQQQQPQQQQQQQQQDQLSGVTGKIRDLNESIWIHLGGYAESIGEQDKALASYENALRHNPFSIKALTQIASLFRIKEQYSKAAEYFQRIVTIESKNGEVWGALGHCYLMMDDLQKAYTAYQQALYHLPNPKDPNLWYGIGILYDRYGSYDHAEEAFTAVLKMDNKFEKSTEIYFRLGVLYKHQGKYDQSLEYFQHLVKNPPLPLTTSDIWFQIGHVYELQKEYHKSKDAYEKVLKDNATHSKVLQQLGWLYHHNPLFTNQEYAINYLMRSIDSDSSDAQTWYLLGRCYMTQQKYKKAYDAYQQAVYRDGRNPTFWCSIGVLYYQINQYRDALDAYTRAIRLNPFLSEVWYDLGTLYESCHQHTDSLDAYQRAAELDPHNKHIQSRLATLRAQVSGKPIGKDGYDLQNGEHGEHGGKSTPMIIEPNSPGTGAMESLGKGGQNNRNGNNNGNNSFVPELAEINSHLPEDMRNNSSLPSSNELNSSLIDRKTERGRGEDMHNSHHSQYSNSMSMNNMNNNNNNMNMNNNMNNNMNNMNNNNNNMNSMNNMNNNNNNINNNMSNNNNNNHNNHQMNQYNNNNNNSNINNNNNNHHNMNDNVNSKNNDVLDRRYKGILEREKTSPNGDGRDNRDNIRDNRDNRDSRDGRDNRDGRDSRDRIQEYTREYNNNNNNNNSISSINNNNNNNNNNYNNNNNNNNNNNNNNNNNGLRATSPLPSHNDRRSYERDNKERINNNNNNNNNMNNNMNNNMNNMNNNNNNSNISRFEHQNNRTSSPFENNSNNNNNNNNNNNNNINYNNIGQRALSPQSSQHKDRREIILDEESDINERSKTRSPSIVKEAEEKRETVIVDKERSPTPIITEKPDEKQVEKVTDKESSLVEKVDKENEKESPSSSSSSKEIEKETEKEKEKEKEKEKEVEKEVEKEIENDKEKEKEKEVEKDVEENKSVEKSSEKPVEKESTTTTTNDEDEEGELSEPTTTTKKDDSSKLPTDEKKLSSVSPTTTAVEQSRDETKELEMDTKEDSEKEKKSSTTTTAAASESVKPIDEEKKSPTTTTTTTTNTTTVEPTHKDKESSKNDDTTTTTTTTTTKSAKSPNSSPTRSDEVVEPHQDASQEEINKRKLEDDITSTPSKRLKPDSTPSSATTASTPSEQPESPLKKENPVGETLSPEIKDSKSSSSSSSSSSSSTNTGSSSTNSSAKNERDRDRERERERERDREREREREREREREREKNKQPTRAPIKPSSRKLER.

The segment at 53-143 (QQQQQHQQHQ…QQQQQQQQQQ (91 aa)) is disordered. TPR repeat units lie at residues 171-204 (ESIWIHLGGYAESIGEQDKALASYENALRHNPFS), 206-238 (KALTQIASLFRIKEQYSKAAEYFQRIVTIESKN), 239-272 (GEVWGALGHCYLMMDDLQKAYTAYQQALYHLPNP), 275-308 (PNLWYGIGILYDRYGSYDHAEEAFTAVLKMDNKF), 312-345 (TEIYFRLGVLYKHQGKYDQSLEYFQHLVKNPPLP), 349-382 (SDIWFQIGHVYELQKEYHKSKDAYEKVLKDNATH), 384-419 (KVLQQLGWLYHHNPLFTNQEYAINYLMRSIDSDSSD), 420-453 (AQTWYLLGRCYMTQQKYKKAYDAYQQAVYRDGRN), 454-487 (PTFWCSIGVLYYQINQYRDALDAYTRAIRLNPFL), and 489-521 (EVWYDLGTLYESCHQHTDSLDAYQRAAELDPHN). Disordered stretches follow at residues 539 to 596 (PIGK…NSFV), 632 to 938 (ERGR…YNNI), and 958 to 1390 (LDEE…KLER). Residues 540-557 (IGKDGYDLQNGEHGEHGG) show a composition bias toward basic and acidic residues. Residues 582 to 593 (QNNRNGNNNGNN) are compositionally biased toward low complexity. A compositionally biased stretch (basic and acidic residues) spans 632–641 (ERGRGEDMHN). Residues 644–744 (HSQYSNSMSM…MNDNVNSKNN (101 aa)) show a composition bias toward low complexity. Basic and acidic residues predominate over residues 745–803 (DVLDRRYKGILEREKTSPNGDGRDNRDNIRDNRDNRDSRDGRDNRDGRDSRDRIQEYTR). Residues 805–846 (YNNNNNNNNSISSINNNNNNNNNNYNNNNNNNNNNNNNNNNN) show a composition bias toward low complexity. Positions 857-871 (HNDRRSYERDNKERI) are enriched in basic and acidic residues. Composition is skewed to low complexity over residues 872–898 (NNNNNNNNNMNNNMNNNMNNMNNNNNN) and 917–937 (NNSNNNNNNNNNNNNNINYNN). Composition is skewed to basic and acidic residues over residues 977–993 (KEAEEKRETVIVDKERS), 1000–1029 (EKPDEKQVEKVTDKESSLVEKVDKENEKES), 1037–1099 (KEIE…EKES), and 1120–1135 (TKKDDSSKLPTDEKKL). Over residues 1136-1146 (SSVSPTTTAVE) the composition is skewed to polar residues. The span at 1147 to 1169 (QSRDETKELEMDTKEDSEKEKKS) shows a compositional bias: basic and acidic residues. 2 stretches are compositionally biased toward low complexity: residues 1170–1180 (STTTTAAASES) and 1192–1203 (TTTTTTTTNTTT). A compositionally biased stretch (basic and acidic residues) spans 1206–1218 (PTHKDKESSKNDD). A compositionally biased stretch (low complexity) spans 1219 to 1228 (TTTTTTTTTT). Residues 1229–1239 (KSAKSPNSSPT) show a composition bias toward polar residues. Positions 1240 to 1263 (RSDEVVEPHQDASQEEINKRKLED) are enriched in basic and acidic residues. Composition is skewed to low complexity over residues 1277-1289 (STPSSATTASTPS) and 1315-1337 (SSSSSSSSSSSSTNTGSSSTNSS). The segment covering 1339 to 1374 (KNERDRDRERERERERDREREREREREREREREKNK) has biased composition (basic and acidic residues).

This sequence belongs to the CYC8/SSN6 family. As to quaternary structure, associates with tupA to form the trfA-tupA corepressor complex.

Its subcellular location is the nucleus. Functionally, acts as a component of the trfA-tupA corepressor complex which is involved in the repression of many genes in a wide variety of physiological processes. May also be involved in the derepression of at least some target genes. The complex is recruited to target genes by interaction with DNA-bound transcriptional repressors. The complex recruits histone deacetylases to produce a repressive chromatin structure, interacts with hypoacetylated N-terminal tails of histones H3 and H4 that have been programmed for repression by the action of histone deacetylases and interferes directly with the transcriptional machinery by associating with the RNA polymerase II mediator complex. Required for normal growth and for aggregation in early development. Required for a proper chemotactic response to cAMP. In Dictyostelium discoideum (Social amoeba), this protein is General transcriptional corepressor trfA (trfA).